Reading from the N-terminus, the 151-residue chain is Ribosome maturation factor RimP (151 aa).

Belongs to the RimP family.

It localises to the cytoplasm. Required for maturation of 30S ribosomal subunits. The protein is Ribosome maturation factor RimP of Persephonella marina (strain DSM 14350 / EX-H1).